Here is a 147-residue protein sequence, read N- to C-terminus: Large ribosomal subunit protein bL9 (147 aa).

Positions 44–63 (VKTLDAQKRSEDKRKEQEKL) are disordered. The segment covering 48–63 (DAQKRSEDKRKEQEKL) has biased composition (basic and acidic residues).

The protein belongs to the bacterial ribosomal protein bL9 family.

Binds to the 23S rRNA. This chain is Large ribosomal subunit protein bL9, found in Brevibacillus brevis (strain 47 / JCM 6285 / NBRC 100599).